Consider the following 447-residue polypeptide: N-succinylarginine dihydrolase (447 aa).

Substrate-binding positions include 19 to 28 (AGLSFGNEAS), Asn110, and 137 to 138 (HR). Glu174 is an active-site residue. Residue Arg212 coordinates substrate. The active site involves His248. Substrate-binding residues include Asp250 and Asn359. The Nucleophile role is filled by Cys365.

The protein belongs to the succinylarginine dihydrolase family. Homodimer.

It catalyses the reaction N(2)-succinyl-L-arginine + 2 H2O + 2 H(+) = N(2)-succinyl-L-ornithine + 2 NH4(+) + CO2. Its pathway is amino-acid degradation; L-arginine degradation via AST pathway; L-glutamate and succinate from L-arginine: step 2/5. Catalyzes the hydrolysis of N(2)-succinylarginine into N(2)-succinylornithine, ammonia and CO(2). The protein is N-succinylarginine dihydrolase of Escherichia coli O1:K1 / APEC.